We begin with the raw amino-acid sequence, 39 residues long: Cytochrome b559 subunit beta (39 aa).

A helical transmembrane segment spans residues 14 to 30 (WLAVHGLAVPTVFFLGS). H18 lines the heme pocket.

The protein belongs to the PsbE/PsbF family. Heterodimer of an alpha subunit and a beta subunit. PSII is composed of 1 copy each of membrane proteins PsbA, PsbB, PsbC, PsbD, PsbE, PsbF, PsbH, PsbI, PsbJ, PsbK, PsbL, PsbM, PsbT, PsbX, PsbY, PsbZ, Psb30/Ycf12, at least 3 peripheral proteins of the oxygen-evolving complex and a large number of cofactors. It forms dimeric complexes. Requires heme b as cofactor.

The protein resides in the plastid membrane. Functionally, this b-type cytochrome is tightly associated with the reaction center of photosystem II (PSII). PSII is a light-driven water:plastoquinone oxidoreductase that uses light energy to abstract electrons from H(2)O, generating O(2) and a proton gradient subsequently used for ATP formation. It consists of a core antenna complex that captures photons, and an electron transfer chain that converts photonic excitation into a charge separation. In Cuscuta europaea (European dodder), this protein is Cytochrome b559 subunit beta.